We begin with the raw amino-acid sequence, 260 residues long: Ribonuclease HII (260 aa).

The 188-residue stretch at 73 to 260 (LHIAGIDEAG…APVQQQLDIV (188 aa)) folds into the RNase H type-2 domain. 3 residues coordinate a divalent metal cation: D79, E80, and D171.

The protein belongs to the RNase HII family. Mn(2+) is required as a cofactor. It depends on Mg(2+) as a cofactor.

The protein resides in the cytoplasm. It carries out the reaction Endonucleolytic cleavage to 5'-phosphomonoester.. Its function is as follows. Endonuclease that specifically degrades the RNA of RNA-DNA hybrids. The chain is Ribonuclease HII from Desulfitobacterium hafniense (strain Y51).